Reading from the N-terminus, the 89-residue chain is Small ribosomal subunit protein uS14A (89 aa).

Belongs to the universal ribosomal protein uS14 family. Part of the 30S ribosomal subunit. Contacts proteins S3 and S10.

Binds 16S rRNA, required for the assembly of 30S particles and may also be responsible for determining the conformation of the 16S rRNA at the A site. This is Small ribosomal subunit protein uS14A from Lactococcus lactis subsp. lactis (strain IL1403) (Streptococcus lactis).